A 632-amino-acid chain; its full sequence is Dihydrolipoyllysine-residue acetyltransferase component of pyruvate dehydrogenase complex, mitochondrial (632 aa).

The N-terminal 77 residues, 1–77 (MWRVCARRVQ…LLGSPSRRSY (77 aa)), are a transit peptide targeting the mitochondrion. Lipoyl-binding domains follow at residues 82-158 (HQKV…CITV) and 208-284 (HMQI…CIIV). The residue at position 91 (Ser-91) is a Phosphoserine. 2 positions are modified to N6-lipoyllysine: Lys-123 and Lys-249. The region spanning 342 to 379 (FVSPLAKKLAAEKGIDLTQVKGTGPEGRIIKKDIDSFV) is the Peripheral subunit-binding (PSBD) domain. Arg-446 is a binding site for CoA. An N6-acetyllysine modification is found at Lys-451. Lys-458 bears the N6-succinyllysine mark. Residue Ser-460 coordinates CoA. An N6-succinyllysine modification is found at Lys-532. CoA contacts are provided by Ser-551, Asn-552, and Gly-576. Residues His-605 and Asp-609 contribute to the active site.

This sequence belongs to the 2-oxoacid dehydrogenase family. As to quaternary structure, part of the pyruvate dehydrogenase complex (PDHc) that is a multi-enzyme complex composed of multiple copies of three enzymes, pyruvate dehydrogenase (subunits PDH1A and PDHB, E1 component), dihydrolipoamide acetyltransferase (DLAT, E2 component), and dihydrolipoamide dehydrogenase (DLD, E3 component) to which is added an additional protein the E3-binding protein (PDHX, E3BP). In terms of structural architecture, the E2 and E3BP components assemble into a 60meric central core with icosahedral symmetry. The central core is decorated with E1 and E3 proteins. Currently, two alternative models for the E2:E3BP stoichiometry are considered as being either 48:12 (E2(48)-E3BP(12)) or 40:20 (E2(40)-E3BP(20)). Interacts with PDK2 and PDK3. Interacts with SIRT4. Interacts with PDHB. It depends on (R)-lipoate as a cofactor. In terms of processing, delipoylated at Lys-123 and Lys-249 by SIRT4, delipoylation decreases the PHD complex activity. In terms of tissue distribution, expressed in flagella of epididymal sperm.

The protein resides in the mitochondrion matrix. The enzyme catalyses N(6)-[(R)-dihydrolipoyl]-L-lysyl-[protein] + acetyl-CoA = N(6)-[(R)-S(8)-acetyldihydrolipoyl]-L-lysyl-[protein] + CoA. Its function is as follows. As part of the pyruvate dehydrogenase complex, catalyzes the transfers of an acetyl group to a lipoic acid moiety. The pyruvate dehydrogenase complex, catalyzes the overall conversion of pyruvate to acetyl-CoA and CO(2), and thereby links cytoplasmic glycolysis and the mitochondrial tricarboxylic acid (TCA) cycle. This chain is Dihydrolipoyllysine-residue acetyltransferase component of pyruvate dehydrogenase complex, mitochondrial, found in Rattus norvegicus (Rat).